The chain runs to 335 residues: Zinc finger protein 396 (335 aa).

Residues Arg-52–Leu-134 enclose the SCAN box domain. C2H2-type zinc fingers lie at residues Gln-251 to His-273, Tyr-279 to His-301, and Tyr-307 to His-329.

This sequence belongs to the krueppel C2H2-type zinc-finger protein family. Isoforms 1 and 2 can both homo- and hetero-associate. Expressed strongly in liver, moderately in skeletal muscle and weakly in kidney, pancreas, spleen and prostate.

The protein localises to the nucleus. The protein resides in the cytoplasm. Functionally, isoform 1 and isoform 2 act as DNA-dependent transcriptional repressors. This chain is Zinc finger protein 396 (ZNF396), found in Homo sapiens (Human).